The following is a 407-amino-acid chain: NADH dehydrogenase [ubiquinone] 1 alpha subcomplex subunit 10, mitochondrial (407 aa).

The transit peptide at 1-60 (MTAVFRVGLVRLVSRATQSPNLLQAQTNALPAAFQQRCSISGKTMRGGPRVPKAAPYPYK) directs the protein to the mitochondrion.

Belongs to the complex I NDUFA10 subunit family. Complex I is composed of 45 different subunits. This a component of the hydrophobic protein fraction. Forms a complex including sicily, ND-42 and Hsp83; the complex is necessary to chaperone ND-42 in the cytoplasm before mitochondrial import; the interaction between sicily and ND-42 is direct and occurs preferably between the unprocessed forms in the cytoplasm. FAD is required as a cofactor. Expressed in muscles (at protein level).

The protein localises to the mitochondrion matrix. It localises to the cytoplasm. Accessory subunit of the mitochondrial membrane respiratory chain NADH dehydrogenase (Complex I), that is believed not to be involved in catalysis. Complex I functions in the transfer of electrons from NADH to the respiratory chain. The immediate electron acceptor for the enzyme is believed to be ubiquinone. This Drosophila melanogaster (Fruit fly) protein is NADH dehydrogenase [ubiquinone] 1 alpha subcomplex subunit 10, mitochondrial.